A 71-amino-acid chain; its full sequence is Small ribosomal subunit protein bS21 (71 aa).

It belongs to the bacterial ribosomal protein bS21 family.

This is Small ribosomal subunit protein bS21 from Blochmanniella floridana.